The chain runs to 511 residues: MTINSSNIENPPSKINSRFSKLTDYIWPIKRHEVSKFLFITLLMFCILFIQNLIRALKDSIVTTMIGAETISFLKFWGVMPSAFLMTAIYVKLVNRMKAENIFYLIISIFLAFFALFAYVIFPNHEILHLSPVTVQNLTANLLNLKWFILLLSKWSFSLFYIIAELWPNVVFALLFWQFVNNITTVEESKRFYPLFGLLSQTGIYLAGQFLENLSNINDYVTNKFALQSSFHTLSIQIILTIVLILGIIAIKTFWLLNHKVLDKEHMALLKFKAKKKSMTIAESFQMILSSRHIRLIATLLICYGIAINLVEGPWKAAATKIYKTPTEYAAFIGSYLSYTGVFTILFVVLGSNIVRRLGWFTAAVITPLIVFITGILFFAVNNFEGFAGLIIANFILTDPALIAITIGAIQNVLSKSSKYTLFDSTKEMAYVPLDPEIKIKGKAAADVIGTKLGKSGSAFLQSLVFIILPSASYQSISICLMIIFIITCLTWLWATKELNKEYKNSIKFSQ.

12 helical membrane-spanning segments follow: residues 34 to 54, 71 to 91, 102 to 122, 157 to 177, 192 to 212, 231 to 251, 296 to 316, 330 to 350, 361 to 381, 390 to 410, 453 to 473, and 476 to 496; these read VSKFLFITLLMFCILFIQNLI, ISFLKFWGVMPSAFLMTAIYV, IFYLIISIFLAFFALFAYVIF, FSLFYIIAELWPNVVFALLFW, FYPLFGLLSQTGIYLAGQFLE, FHTLSIQIILTIVLILGIIAI, LIATLLICYGIAINLVEGPWK, AAFIGSYLSYTGVFTILFVVL, FTAAVITPLIVFITGILFFAV, LIIANFILTDPALIAITIGAI, LGKSGSAFLQSLVFIILPSAS, and SISICLMIIFIITCLTWLWAT.

It belongs to the ADP/ATP translocase tlc family.

It localises to the cell membrane. In terms of biological role, provides the rickettsial cell with host ATP in exchange for rickettsial ADP. This is an obligate exchange system. This energy acquiring activity is an important component of rickettsial parasitism. The chain is ADP,ATP carrier protein 4 (tlcD) from Rickettsia felis (strain ATCC VR-1525 / URRWXCal2) (Rickettsia azadi).